A 472-amino-acid chain; its full sequence is UDP-glycosyltransferase 100 (472 aa).

Histidine 15 functions as the Proton acceptor in the catalytic mechanism. Histidine 15 contributes to the an anthocyanidin binding site. Aspartate 117 serves as the catalytic Charge relay. The UDP-alpha-D-glucose site is built by alanine 344, glutamine 346, histidine 361, tryptophan 364, asparagine 365, serine 366, and glutamate 369. Position 384 (glycine 384) interacts with an anthocyanidin. The UDP-alpha-D-glucose site is built by glutamate 385 and glutamine 386.

Belongs to the UDP-glycosyltransferase family.

It catalyses the reaction (20S)-protopanaxadiol + UDP-alpha-D-glucose = (20S)-ginsenoside C-K + UDP + H(+). It carries out the reaction (20S)-protopanaxatriol + UDP-alpha-D-glucose = (20S)-ginsenoside Rh1 + UDP + H(+). The catalysed reaction is (20S)-ginsenoside F1 + UDP-alpha-D-glucose = (20S)-ginsenoside Rg1 + UDP + H(+). It functions in the pathway secondary metabolite biosynthesis; terpenoid biosynthesis. Its function is as follows. Component of the dammarane-type triterpene saponins (e.g. PPT-type ginsenosides or panaxosides) biosynthetic pathway. Glycosyltransferase that catalyzes the biosynthesis of ginsenoside Rh1 from protopanaxatriol (PPT) and the conversion of ginsenoside F1 to ginsenoside Rg1. This Panax ginseng (Korean ginseng) protein is UDP-glycosyltransferase 100.